The following is a 302-amino-acid chain: Sulfate adenylyltransferase subunit 2 (302 aa).

Residues 280-302 form a disordered region; sequence RQGRLIDSDQSASMEQKKRQGYF.

The protein belongs to the PAPS reductase family. CysD subfamily. Heterodimer composed of CysD, the smaller subunit, and CysN.

It carries out the reaction sulfate + ATP + H(+) = adenosine 5'-phosphosulfate + diphosphate. It participates in sulfur metabolism; hydrogen sulfide biosynthesis; sulfite from sulfate: step 1/3. Functionally, with CysN forms the ATP sulfurylase (ATPS) that catalyzes the adenylation of sulfate producing adenosine 5'-phosphosulfate (APS) and diphosphate, the first enzymatic step in sulfur assimilation pathway. APS synthesis involves the formation of a high-energy phosphoric-sulfuric acid anhydride bond driven by GTP hydrolysis by CysN coupled to ATP hydrolysis by CysD. The protein is Sulfate adenylyltransferase subunit 2 of Shewanella putrefaciens (strain CN-32 / ATCC BAA-453).